We begin with the raw amino-acid sequence, 374 residues long: WAT1-related protein At1g60050 (374 aa).

10 helical membrane passes run 11 to 31 (IVPFIVMALMEACTIALTILA), 42 to 62 (FVFIVYTNALGSLLLLPYSFY), 82 to 102 (IFLLGFTGVFLFQNMAFLGLS), 107 to 127 (IVVCAMGLQSPAFSFLLSLAL), 145 to 165 (IGTLICFTGAFVEVIYLGPFI), 194 to 214 (WALGSLLLACATLSISIWNII), 228 to 248 (VVSAYSLAGTLQCAIFSAFME), 255 to 275 (ELKLNMDLYLIIATGIFGSII), 292 to 312 (VPLFKPFGILWASIFGTSFFV), and 315 to 335 (LHYGSVLGAAIAGTGYLLIMW). An EamA domain is found at 26–155 (ALTILAKTAL…GTLICFTGAF (130 aa)).

The protein belongs to the drug/metabolite transporter (DMT) superfamily. Plant drug/metabolite exporter (P-DME) (TC 2.A.7.4) family.

Its subcellular location is the membrane. This chain is WAT1-related protein At1g60050, found in Arabidopsis thaliana (Mouse-ear cress).